Consider the following 38-residue polypeptide: Potassium channel toxin alpha-KTx 2.21 (38 aa).

Cystine bridges form between cysteine 7–cysteine 29, cysteine 13–cysteine 34, and cysteine 17–cysteine 36.

As to expression, expressed by the venom gland.

The protein localises to the secreted. Functionally, inhibits human voltage-gated potassium (Kv) channels Kv1.2/KCNA2 and Kv1.3/KCNA3. Does not block human Kv1.1/KCNA1 at 100nM concentration. This Centruroides bonito (Scorpion) protein is Potassium channel toxin alpha-KTx 2.21.